A 183-amino-acid polypeptide reads, in one-letter code: Adenine phosphoribosyltransferase (183 aa).

The protein belongs to the purine/pyrimidine phosphoribosyltransferase family. As to quaternary structure, homodimer.

It is found in the cytoplasm. The catalysed reaction is AMP + diphosphate = 5-phospho-alpha-D-ribose 1-diphosphate + adenine. It functions in the pathway purine metabolism; AMP biosynthesis via salvage pathway; AMP from adenine: step 1/1. Functionally, catalyzes a salvage reaction resulting in the formation of AMP, that is energically less costly than de novo synthesis. This is Adenine phosphoribosyltransferase from Cronobacter sakazakii (strain ATCC BAA-894) (Enterobacter sakazakii).